A 354-amino-acid chain; its full sequence is Cytoplasmic tRNA 2-thiolation protein 1 (354 aa).

This sequence belongs to the TtcA family. CTU1/NCS6/ATPBD3 subfamily.

It is found in the cytoplasm. It functions in the pathway tRNA modification; 5-methoxycarbonylmethyl-2-thiouridine-tRNA biosynthesis. Its function is as follows. Plays a central role in 2-thiolation of mcm(5)S(2)U at tRNA wobble positions of tRNA(Lys), tRNA(Glu) and tRNA(Gln). Directly binds tRNAs and probably acts by catalyzing adenylation of tRNAs, an intermediate required for 2-thiolation. It is unclear whether it acts as a sulfurtransferase that transfers sulfur from thiocarboxylated URM1 onto the uridine of tRNAs at wobble position. Prior mcm(5) tRNA modification by the elongator complex is required for 2-thiolation. May also be involved in protein urmylation. In Laccaria bicolor (strain S238N-H82 / ATCC MYA-4686) (Bicoloured deceiver), this protein is Cytoplasmic tRNA 2-thiolation protein 1.